The following is a 554-amino-acid chain: Propanediol dehydratase large subunit (554 aa).

Belongs to the diol/glycerol dehydratase large subunit family. As to quaternary structure, the propanediol dehydratase enzyme is a heterotrimeric complex composed of a large (PduC), a medium (PduD) and a small (PduE) subunit. The cofactor is adenosylcob(III)alamin.

The protein resides in the bacterial microcompartment. The enzyme catalyses propane-1,2-diol = propanal + H2O. It functions in the pathway polyol metabolism; 1,2-propanediol degradation. Its function is as follows. Part of the PduCDE complex that catalyzes the dehydration of 1,2-propanediol (1,2-PD) to propionaldehyde. This subunit is directly targeted to the bacterial microcompartment (BMC). Expression of a cosmid containing the full 21-gene pdu operon in E.coli allows E.coli to grow on 1,2-propanediol (1,2-PD) with the appearance of BMCs in its cytoplasm. In terms of biological role, the 1,2-PD-specific bacterial microcompartment (BMC) concentrates low levels of 1,2-PD catabolic enzymes, concentrates volatile reaction intermediates thus enhancing pathway flux and keeps the level of toxic, mutagenic propionaldehyde low. This Citrobacter freundii protein is Propanediol dehydratase large subunit.